Consider the following 450-residue polypeptide: Signal recognition particle 54 kDa protein (450 aa).

GTP is bound by residues 107–114 (GIQGSGKT), 188–192 (DTAGR), and 247–250 (TKLD).

This sequence belongs to the GTP-binding SRP family. SRP54 subfamily. In terms of assembly, part of the signal recognition particle protein translocation system, which is composed of SRP and FtsY. Archaeal SRP consists of a 7S RNA molecule of 300 nucleotides and two protein subunits: SRP54 and SRP19.

Its subcellular location is the cytoplasm. It carries out the reaction GTP + H2O = GDP + phosphate + H(+). Involved in targeting and insertion of nascent membrane proteins into the cytoplasmic membrane. Binds to the hydrophobic signal sequence of the ribosome-nascent chain (RNC) as it emerges from the ribosomes. The SRP-RNC complex is then targeted to the cytoplasmic membrane where it interacts with the SRP receptor FtsY. This Methanococcus maripaludis (strain DSM 14266 / JCM 13030 / NBRC 101832 / S2 / LL) protein is Signal recognition particle 54 kDa protein.